Consider the following 552-residue polypeptide: Arginine--tRNA ligase (552 aa).

Positions 129-139 (ANPTGPVTLAS) match the 'HIGH' region motif.

The protein belongs to the class-I aminoacyl-tRNA synthetase family. As to quaternary structure, monomer.

Its subcellular location is the cytoplasm. It catalyses the reaction tRNA(Arg) + L-arginine + ATP = L-arginyl-tRNA(Arg) + AMP + diphosphate. The polypeptide is Arginine--tRNA ligase (Frankia alni (strain DSM 45986 / CECT 9034 / ACN14a)).